The primary structure comprises 126 residues: Histone H2B type 1-K (126 aa).

Residues 1-12 (MPEPAKSAPAPK) are compositionally biased toward low complexity. Positions 1–36 (MPEPAKSAPAPKKGSKKAVTKAQKKDGKKRKRSRKE) are disordered. P2 carries the post-translational modification N-acetylproline. E3 carries the ADP-ribosyl glutamic acid modification. K6 is subject to N6-(2-hydroxyisobutyryl)lysine; alternate. K6 bears the N6-(beta-hydroxybutyryl)lysine; alternate mark. At K6 the chain carries N6-acetyllysine; alternate. K6 carries the N6-butyryllysine; alternate modification. Position 6 is an N6-crotonyllysine; alternate (K6). K6 is subject to N6-lactoyllysine; alternate. A Glycyl lysine isopeptide (Lys-Gly) (interchain with G-Cter in SUMO2); alternate cross-link involves residue K6. Residue S7 is modified to ADP-ribosylserine. Position 12 is an N6-(beta-hydroxybutyryl)lysine; alternate (K12). K12 and K13 each carry N6-acetyllysine; alternate. N6-crotonyllysine; alternate is present on residues K12 and K13. K12 carries the N6-lactoyllysine; alternate modification. K13 is modified (N6-(2-hydroxyisobutyryl)lysine; alternate). A Phosphoserine; by STK4/MST1 modification is found at S15. N6-acetyllysine; alternate is present on residues K16, K17, K21, and K24. N6-crotonyllysine; alternate is present on residues K16, K17, K21, and K24. Residues K16, K17, K21, and K24 each carry the N6-lactoyllysine; alternate modification. K17 is modified (N6-glutaryllysine; alternate). 2 positions are modified to N6-(2-hydroxyisobutyryl)lysine; alternate: K21 and K24. An N6-(beta-hydroxybutyryl)lysine; alternate modification is found at K21. An N6-butyryllysine; alternate modification is found at K21. A Glycyl lysine isopeptide (Lys-Gly) (interchain with G-Cter in SUMO2); alternate cross-link involves residue K21. An N6-(2-hydroxyisobutyryl)lysine modification is found at K25. At K35 the chain carries N6-(2-hydroxyisobutyryl)lysine; alternate. K35 carries the N6-(beta-hydroxybutyryl)lysine; alternate modification. The residue at position 35 (K35) is an N6-crotonyllysine; alternate. K35 carries the post-translational modification N6-glutaryllysine; alternate. K35 is modified (N6-succinyllysine; alternate). K35 is covalently cross-linked (Glycyl lysine isopeptide (Lys-Gly) (interchain with G-Cter in ubiquitin); alternate). E36 is subject to PolyADP-ribosyl glutamic acid. The residue at position 37 (S37) is a Phosphoserine; by AMPK. Residues K44, K47, and K58 each carry the N6-(2-hydroxyisobutyryl)lysine; alternate modification. An N6-lactoyllysine; alternate modification is found at K44. K44 and K47 each carry N6-glutaryllysine; alternate. K47 is modified (N6-methyllysine; alternate). K58 is subject to N6,N6-dimethyllysine; alternate. A Dimethylated arginine modification is found at R80. K86 is modified (N6-(2-hydroxyisobutyryl)lysine; alternate). An N6-acetyllysine; alternate modification is found at K86. K86 is modified (N6-lactoyllysine; alternate). The residue at position 86 (K86) is an N6,N6,N6-trimethyllysine; alternate. Residues R87 and R93 each carry the omega-N-methylarginine modification. Residue K109 is modified to N6-(2-hydroxyisobutyryl)lysine; alternate. K109 carries the post-translational modification N6-(beta-hydroxybutyryl)lysine; alternate. K109 carries the N6-lactoyllysine; alternate modification. K109 bears the N6-glutaryllysine; alternate mark. Position 109 is an N6-methyllysine; alternate (K109). A glycan (O-linked (GlcNAc) serine) is linked at S113. The residue at position 116 (T116) is a Phosphothreonine. K117 and K121 each carry N6-(2-hydroxyisobutyryl)lysine; alternate. At K117 the chain carries N6-(beta-hydroxybutyryl)lysine; alternate. N6-lactoyllysine; alternate is present on residues K117 and K121. K117 and K121 each carry N6-glutaryllysine; alternate. An N6-succinyllysine; alternate mark is found at K117 and K121. K117 carries the post-translational modification N6-methylated lysine; alternate. A Glycyl lysine isopeptide (Lys-Gly) (interchain with G-Cter in ubiquitin); alternate cross-link involves residue K121.

This sequence belongs to the histone H2B family. The nucleosome is a histone octamer containing two molecules each of H2A, H2B, H3 and H4 assembled in one H3-H4 heterotetramer and two H2A-H2B heterodimers. The octamer wraps approximately 147 bp of DNA. Monoubiquitination at Lys-35 (H2BK34Ub) by the MSL1/MSL2 dimer is required for histone H3 'Lys-4' (H3K4me) and 'Lys-79' (H3K79me) methylation and transcription activation at specific gene loci, such as HOXA9 and MEIS1 loci. Similarly, monoubiquitination at Lys-121 (H2BK120Ub) by the RNF20/40 complex gives a specific tag for epigenetic transcriptional activation and is also prerequisite for histone H3 'Lys-4' and 'Lys-79' methylation. It also functions cooperatively with the FACT dimer to stimulate elongation by RNA polymerase II. H2BK120Ub also acts as a regulator of mRNA splicing: deubiquitination by USP49 is required for efficient cotranscriptional splicing of a large set of exons. Post-translationally, phosphorylated on Ser-15 (H2BS14ph) by STK4/MST1 during apoptosis; which facilitates apoptotic chromatin condensation. Also phosphorylated on Ser-15 in response to DNA double strand breaks (DSBs), and in correlation with somatic hypermutation and immunoglobulin class-switch recombination. Phosphorylation at Ser-37 (H2BS36ph) by AMPK in response to stress promotes transcription. In terms of processing, glcNAcylation at Ser-113 promotes monoubiquitination of Lys-121. It fluctuates in response to extracellular glucose, and associates with transcribed genes. ADP-ribosylated by PARP1 or PARP2 on Ser-7 (H2BS6ADPr) in response to DNA damage. H2BS6ADPr promotes recruitment of CHD1L. Mono-ADP-ribosylated on Glu-3 (H2BE2ADPr) by PARP3 in response to single-strand breaks. Poly ADP-ribosylation on Glu-36 (H2BE35ADPr) by PARP1 regulates adipogenesis: it inhibits phosphorylation at Ser-37 (H2BS36ph), thereby blocking expression of pro-adipogenetic genes. Post-translationally, crotonylation (Kcr) is specifically present in male germ cells and marks testis-specific genes in post-meiotic cells, including X-linked genes that escape sex chromosome inactivation in haploid cells. Crotonylation marks active promoters and enhancers and confers resistance to transcriptional repressors. It is also associated with post-meiotically activated genes on autosomes. In terms of processing, hydroxybutyrylation of histones is induced by starvation. Lactylated in macrophages by EP300/P300 by using lactoyl-CoA directly derived from endogenous or exogenous lactate, leading to stimulates gene transcription.

It is found in the nucleus. It localises to the chromosome. Its function is as follows. Core component of nucleosome. Nucleosomes wrap and compact DNA into chromatin, limiting DNA accessibility to the cellular machineries which require DNA as a template. Histones thereby play a central role in transcription regulation, DNA repair, DNA replication and chromosomal stability. DNA accessibility is regulated via a complex set of post-translational modifications of histones, also called histone code, and nucleosome remodeling. The polypeptide is Histone H2B type 1-K (Mus musculus (Mouse)).